A 175-amino-acid chain; its full sequence is Transcriptional repressor NrdR (175 aa).

The segment at 3-34 (CPICQDTNSRVLESRSAESGKSIRRRRECMNC) is a zinc-finger region. The ATP-cone domain maps to 49–139 (ITIIKRDGKK…VYRKFQGIRD (91 aa)).

The protein belongs to the NrdR family. The cofactor is Zn(2+).

Negatively regulates transcription of bacterial ribonucleotide reductase nrd genes and operons by binding to NrdR-boxes. The protein is Transcriptional repressor NrdR of Trichodesmium erythraeum (strain IMS101).